The following is a 346-amino-acid chain: Holliday junction branch migration complex subunit RuvB (346 aa).

Over residues 1–11 the composition is skewed to polar residues; that stretch reads MTEQRTIASSA. The interval 1–20 is disordered; it reads MTEQRTIASSATREDEAADA. The interval 1–183 is large ATPase domain (RuvB-L); the sequence is MTEQRTIASS…FGIVQRLEFY (183 aa). Residues Ile22, Arg23, Gly64, Lys67, Thr68, Thr69, 130 to 132, Arg173, Tyr183, and Arg220 each bind ATP; that span reads EDF. Thr68 is a binding site for Mg(2+). Positions 184–254 are small ATPAse domain (RuvB-S); the sequence is SPQELTRIVI…VAQAAMQMLK (71 aa). The tract at residues 257 to 346 is head domain (RuvB-H); that stretch reads PEGFDELDRR…PAIGEPGDLF (90 aa). DNA is bound by residues Arg293, Arg312, and Arg317.

It belongs to the RuvB family. As to quaternary structure, homohexamer. Forms an RuvA(8)-RuvB(12)-Holliday junction (HJ) complex. HJ DNA is sandwiched between 2 RuvA tetramers; dsDNA enters through RuvA and exits via RuvB. An RuvB hexamer assembles on each DNA strand where it exits the tetramer. Each RuvB hexamer is contacted by two RuvA subunits (via domain III) on 2 adjacent RuvB subunits; this complex drives branch migration. In the full resolvosome a probable DNA-RuvA(4)-RuvB(12)-RuvC(2) complex forms which resolves the HJ.

It localises to the cytoplasm. The enzyme catalyses ATP + H2O = ADP + phosphate + H(+). In terms of biological role, the RuvA-RuvB-RuvC complex processes Holliday junction (HJ) DNA during genetic recombination and DNA repair, while the RuvA-RuvB complex plays an important role in the rescue of blocked DNA replication forks via replication fork reversal (RFR). RuvA specifically binds to HJ cruciform DNA, conferring on it an open structure. The RuvB hexamer acts as an ATP-dependent pump, pulling dsDNA into and through the RuvAB complex. RuvB forms 2 homohexamers on either side of HJ DNA bound by 1 or 2 RuvA tetramers; 4 subunits per hexamer contact DNA at a time. Coordinated motions by a converter formed by DNA-disengaged RuvB subunits stimulates ATP hydrolysis and nucleotide exchange. Immobilization of the converter enables RuvB to convert the ATP-contained energy into a lever motion, pulling 2 nucleotides of DNA out of the RuvA tetramer per ATP hydrolyzed, thus driving DNA branch migration. The RuvB motors rotate together with the DNA substrate, which together with the progressing nucleotide cycle form the mechanistic basis for DNA recombination by continuous HJ branch migration. Branch migration allows RuvC to scan DNA until it finds its consensus sequence, where it cleaves and resolves cruciform DNA. This is Holliday junction branch migration complex subunit RuvB from Xanthomonas campestris pv. campestris (strain 8004).